Consider the following 268-residue polypeptide: Hydroxyethylthiazole kinase (268 aa).

M45 contributes to the substrate binding site. R121 and T167 together coordinate ATP. G194 contacts substrate.

It belongs to the Thz kinase family. Requires Mg(2+) as cofactor.

The enzyme catalyses 5-(2-hydroxyethyl)-4-methylthiazole + ATP = 4-methyl-5-(2-phosphooxyethyl)-thiazole + ADP + H(+). It participates in cofactor biosynthesis; thiamine diphosphate biosynthesis; 4-methyl-5-(2-phosphoethyl)-thiazole from 5-(2-hydroxyethyl)-4-methylthiazole: step 1/1. Functionally, catalyzes the phosphorylation of the hydroxyl group of 4-methyl-5-beta-hydroxyethylthiazole (THZ). This is Hydroxyethylthiazole kinase from Bacillus cereus (strain ZK / E33L).